The chain runs to 690 residues: Elongation factor G (690 aa).

One can recognise a tr-type G domain in the interval 8–283; it reads EDYRNFGIMA…AVVDYLPSPI (276 aa). Residues 17–24, 81–85, and 135–138 contribute to the GTP site; these read AHIDAGKT, DTPGH, and NKMD.

This sequence belongs to the TRAFAC class translation factor GTPase superfamily. Classic translation factor GTPase family. EF-G/EF-2 subfamily.

It is found in the cytoplasm. In terms of biological role, catalyzes the GTP-dependent ribosomal translocation step during translation elongation. During this step, the ribosome changes from the pre-translocational (PRE) to the post-translocational (POST) state as the newly formed A-site-bound peptidyl-tRNA and P-site-bound deacylated tRNA move to the P and E sites, respectively. Catalyzes the coordinated movement of the two tRNA molecules, the mRNA and conformational changes in the ribosome. The chain is Elongation factor G from Bradyrhizobium diazoefficiens (strain JCM 10833 / BCRC 13528 / IAM 13628 / NBRC 14792 / USDA 110).